Reading from the N-terminus, the 154-residue chain is MTDIIATEVAPEAAEALAPVARAPLGDRPIQTVGRRKEAIVRVRIVPGSGRITCNGRELEAYFPSKVHQQLIKDPLVTTEKAETFDVIANLRGGGTTGQAGALRLAIARALIASEPDDRPALKKAGFLTRDARVKESKKYGLKKARKAPQYSKR.

The disordered stretch occupies residues 135-154; it reads KESKKYGLKKARKAPQYSKR. Residues 140–154 show a composition bias toward basic residues; the sequence is YGLKKARKAPQYSKR.

Belongs to the universal ribosomal protein uS9 family.

This is Small ribosomal subunit protein uS9 from Salinispora arenicola (strain CNS-205).